The following is a 546-amino-acid chain: CTP synthase (546 aa).

An amidoligase domain region spans residues M1–L267. CTP is bound at residue S13. S13 is a binding site for UTP. Residues S14–I19 and D71 each bind ATP. Positions 71 and 141 each coordinate Mg(2+). CTP-binding positions include D148–E150, K188–Q193, and K224. UTP-binding positions include K188–Q193 and K224. Residues E292 to E534 form the Glutamine amidotransferase type-1 domain. Residue G354 coordinates L-glutamine. C381 acts as the Nucleophile; for glutamine hydrolysis in catalysis. Residues L382–Q385, E405, and R462 contribute to the L-glutamine site. Residues H507 and E509 contribute to the active site.

This sequence belongs to the CTP synthase family. In terms of assembly, homotetramer.

The enzyme catalyses UTP + L-glutamine + ATP + H2O = CTP + L-glutamate + ADP + phosphate + 2 H(+). It carries out the reaction L-glutamine + H2O = L-glutamate + NH4(+). The catalysed reaction is UTP + NH4(+) + ATP = CTP + ADP + phosphate + 2 H(+). It functions in the pathway pyrimidine metabolism; CTP biosynthesis via de novo pathway; CTP from UDP: step 2/2. With respect to regulation, allosterically activated by GTP, when glutamine is the substrate; GTP has no effect on the reaction when ammonia is the substrate. The allosteric effector GTP functions by stabilizing the protein conformation that binds the tetrahedral intermediate(s) formed during glutamine hydrolysis. Inhibited by the product CTP, via allosteric rather than competitive inhibition. Its function is as follows. Catalyzes the ATP-dependent amination of UTP to CTP with either L-glutamine or ammonia as the source of nitrogen. Regulates intracellular CTP levels through interactions with the four ribonucleotide triphosphates. The polypeptide is CTP synthase (Microcystis aeruginosa (strain NIES-843 / IAM M-2473)).